A 219-amino-acid chain; its full sequence is Probable N-acetyltransferase camello (219 aa).

2 helical membrane passes run 44-64 (FITFVAFTSVFMGTGSYVLAL) and 66-86 (SLVALLAAGWYGLYSEFHGLA). One can recognise an N-acetyltransferase domain in the interval 62–211 (LALTSLVALL…VHQYTSFTVA (150 aa)).

This sequence belongs to the camello family.

It localises to the golgi apparatus membrane. Functionally, plays a role in regulation of gastrulation, possibly by controlled reduction of cell adhesion in the periblastopore region which is necessary for optimal cell motility. This is Probable N-acetyltransferase camello from Xenopus tropicalis (Western clawed frog).